A 419-amino-acid polypeptide reads, in one-letter code: Glutamate dehydrogenase (419 aa).

Residue lysine 105 is part of the active site. Position 219 to 225 (219 to 225 (GYGNAGY)) interacts with NAD(+).

Belongs to the Glu/Leu/Phe/Val dehydrogenases family. In terms of assembly, homohexamer.

The protein resides in the cytoplasm. The enzyme catalyses L-glutamate + NAD(+) + H2O = 2-oxoglutarate + NH4(+) + NADH + H(+). It catalyses the reaction L-glutamate + NADP(+) + H2O = 2-oxoglutarate + NH4(+) + NADPH + H(+). The sequence is that of Glutamate dehydrogenase (gdhA) from Thermococcus litoralis (strain ATCC 51850 / DSM 5473 / JCM 8560 / NS-C).